The primary structure comprises 410 residues: Transcription factor rglT (410 aa).

The interval 1–24 (MQFDSLPLPPSSSHDTTSVPPLKR) is disordered. Residues 28–55 (CDECRKRKLKCSGEATGCSRCLKQSLPC) constitute a DNA-binding region (zn(2)-C6 fungal-type). A disordered region spans residues 353 to 372 (HRTRTVESPNEPGSCSPVSH). Positions 358-369 (VESPNEPGSCSP) are enriched in polar residues.

Its subcellular location is the nucleus. In terms of biological role, transcription factor that is involved in protection against oxidative stress. Binds to promoter regions of the gliotoxin (GT) biosynthetic genes gliZ, gliF, gliT, gliM, gliA and gtmA. Two related but different DNA motifs (5'-TCGG-3' and 5'-CGGNCGG-3') are specifically enriched among rglT binding sites in GT-inducing conditions. Also indirectly regulates the expression of gliP, gliG, gliH and gliN. Plays a key role in resistance against exogenously-added GT and GT biosynthesis, mainly through the direct regulation of gliT. Furthermore, rglT is important for virulence in chemotherapeutic mice with invasive pulmonary aspergillosis (IPA). The protein is Transcription factor rglT of Aspergillus fumigatus (strain CBS 144.89 / FGSC A1163 / CEA10) (Neosartorya fumigata).